A 454-amino-acid polypeptide reads, in one-letter code: Probable ECA polymerase (454 aa).

Helical transmembrane passes span 3–23 (LGQFGGLFCIYLIAVIFILTL), 39–59 (FSMLYLLTFYFGFPLTCMLVF), 61–81 (FGVAVVPVEYLLYAMLSATAF), 119–139 (LALVAVGTVGIFFMQNGFLLF), 154–174 (GVALKRFFYFFIPAMLVVYFL), 180–200 (AWFFFLASTVAFGILTYVIVG), 201–221 (GTRANIIIAFSLFLFIGIVRG), 222–242 (WITLWMLAAAGVFGIVGMFWL), 340–360 (LVVMGGVLFIPLGAIVVGLII), 377–397 (YKAAILQSFCFGAVFNIIVLA), and 409–429 (VFFCVIFGACLVLAKLLYWLF).

This sequence belongs to the WzyE family. As to quaternary structure, probably part of a complex composed of WzxE, WzyE and WzzE.

Its subcellular location is the cell inner membrane. Its pathway is bacterial outer membrane biogenesis; enterobacterial common antigen biosynthesis. Functionally, probably involved in the polymerization of enterobacterial common antigen (ECA) trisaccharide repeat units. The protein is Probable ECA polymerase of Yersinia pseudotuberculosis serotype O:1b (strain IP 31758).